The following is a 154-amino-acid chain: Ribonuclease 8 (154 aa).

The first 27 residues, 1 to 27 (MAPARAGCCPLLLLLLGLWVAQIPVSA), serve as a signal peptide directing secretion. The active-site Proton acceptor is the His-42. Cystine bridges form between Cys-64–Cys-118 and Cys-89–Cys-96. Residues 65 to 69 (KDLNT) and Lys-90 each bind substrate. The active-site Proton donor is His-149.

This sequence belongs to the pancreatic ribonuclease family.

The protein resides in the secreted. Its function is as follows. Has a low ribonuclease activity. The chain is Ribonuclease 8 (RNASE8) from Chlorocebus aethiops (Green monkey).